Consider the following 414-residue polypeptide: Capsid protein (414 aa).

A compositionally biased stretch (polar residues) spans 1-14; that stretch reads MTSNGSQPQASTPM. Disordered stretches follow at residues 1–60, 94–127, and 148–212; these read MTSN…APTA, AQNEAAMQGYEEGSRRNPRLPSSTTAHNDYASMN, and YPTF…NTGG. 2 stretches are compositionally biased toward low complexity: residues 15 to 27 and 38 to 60; these read VSAEEPAAAASVP and PAAAVSAPNSSVVSSAPASAPTA. Polar residues-rich tracts occupy residues 113–127, 153–166, and 185–197; these read LPSSTTAHNDYASMN, GSGSASEPNSQRIF, and QATSGGNTGTPFT.

It localises to the virion. This is Capsid protein from Crataegus (hawthorn).